The primary structure comprises 350 residues: MDINLFDFHLPEELIAQTPLEKRETSRLMVLDRETGDIEHKHFSDILAYLHEGDCLVLNETKVMPARLHGVKEDTGAHIEVLLLKQEEGDTWETLVKPAKRVKEGTVISFGEGKLKATCVGTADQGGRQLEFSYDGIFYEILDELGEMPLPPYIKETLEDRDRYQTVYAKEIGSAAAPTAGLHFTEELLEKLQQKGVKLAFITLHVGLGTFRPVSTDKIEDHHMHAEYYHMSQETADLLNDVKVNGGRIITVGTTSTRTLETIATEHDGKLCGASGWTDIFMYPGYEFKAIDGLITNFHLPKSTLIMLVSAFAGRENVLHAYNEAVKEKYRFFSFGDAMFLASHAKERMK.

Belongs to the QueA family. Monomer.

It localises to the cytoplasm. The enzyme catalyses 7-aminomethyl-7-carbaguanosine(34) in tRNA + S-adenosyl-L-methionine = epoxyqueuosine(34) in tRNA + adenine + L-methionine + 2 H(+). The protein operates within tRNA modification; tRNA-queuosine biosynthesis. Functionally, transfers and isomerizes the ribose moiety from AdoMet to the 7-aminomethyl group of 7-deazaguanine (preQ1-tRNA) to give epoxyqueuosine (oQ-tRNA). The chain is S-adenosylmethionine:tRNA ribosyltransferase-isomerase from Bacillus cytotoxicus (strain DSM 22905 / CIP 110041 / 391-98 / NVH 391-98).